A 223-amino-acid chain; its full sequence is MTQDQLKQAVAQAAVDFILPKLDDKSIVGVGTGSTANCFIDALAKHKAAFDGAVASSEATAARLKGHGIPVYELNTVSDLEFYVDGADESDEHLNLIKGGGAALTREKIVAAVAKTFICIADGSKLVPVLGAFPLPVEVIPMARSHVARQLVKLGGDPVYREGVLTDNGNIIIDVHNMSITNPVELEAQINAIVGVVTNGLFAARPADLLLLGTTEGVKTLTR.

Substrate is bound by residues 32 to 35 (TGST), 85 to 88 (DGAD), and 98 to 101 (KGGG). Glu107 functions as the Proton acceptor in the catalytic mechanism. Lys125 lines the substrate pocket.

This sequence belongs to the ribose 5-phosphate isomerase family. Homodimer.

It carries out the reaction aldehydo-D-ribose 5-phosphate = D-ribulose 5-phosphate. It participates in carbohydrate degradation; pentose phosphate pathway; D-ribose 5-phosphate from D-ribulose 5-phosphate (non-oxidative stage): step 1/1. Functionally, catalyzes the reversible conversion of ribose-5-phosphate to ribulose 5-phosphate. This chain is Ribose-5-phosphate isomerase A, found in Pseudomonas savastanoi pv. phaseolicola (strain 1448A / Race 6) (Pseudomonas syringae pv. phaseolicola (strain 1448A / Race 6)).